Here is a 119-residue protein sequence, read N- to C-terminus: Large ribosomal subunit protein uL18 (119 aa).

The protein belongs to the universal ribosomal protein uL18 family. In terms of assembly, part of the 50S ribosomal subunit; part of the 5S rRNA/L5/L18/L25 subcomplex. Contacts the 5S and 23S rRNAs.

Functionally, this is one of the proteins that bind and probably mediate the attachment of the 5S RNA into the large ribosomal subunit, where it forms part of the central protuberance. The polypeptide is Large ribosomal subunit protein uL18 (Borrelia recurrentis (strain A1)).